The sequence spans 322 residues: Putative heme-binding peroxidase (322 aa).

The Proton acceptor role is filled by histidine 38. Histidine 162 is a binding site for heme b. Tryptophan 178 functions as the Tryptophan radical intermediate in the catalytic mechanism. The segment at 288–322 (ISAPKKSNHPTGPAKGAQGGCPVAASQGGCPRAKL) is disordered.

This sequence belongs to the peroxidase family. Cytochrome c peroxidase subfamily. The cofactor is heme b.

Functionally, destroys radicals which are normally produced within the cells and which are toxic to biological systems. This chain is Putative heme-binding peroxidase, found in Aspergillus fumigatus (strain ATCC MYA-4609 / CBS 101355 / FGSC A1100 / Af293) (Neosartorya fumigata).